The chain runs to 65 residues: MKTKEIRSLSTDELLAKEKQYKEELFNLRFQQATGQLENTARLSQVRKNIARIKTILSEKELEQN.

This sequence belongs to the universal ribosomal protein uL29 family.

This chain is Large ribosomal subunit protein uL29, found in Lactobacillus delbrueckii subsp. bulgaricus (strain ATCC 11842 / DSM 20081 / BCRC 10696 / JCM 1002 / NBRC 13953 / NCIMB 11778 / NCTC 12712 / WDCM 00102 / Lb 14).